Consider the following 121-residue polypeptide: Large ribosomal subunit protein uL18 (121 aa).

It belongs to the universal ribosomal protein uL18 family. In terms of assembly, part of the 50S ribosomal subunit; part of the 5S rRNA/L5/L18/L25 subcomplex. Contacts the 5S and 23S rRNAs.

Its function is as follows. This is one of the proteins that bind and probably mediate the attachment of the 5S RNA into the large ribosomal subunit, where it forms part of the central protuberance. The polypeptide is Large ribosomal subunit protein uL18 (Polaromonas naphthalenivorans (strain CJ2)).